The chain runs to 81 residues: MVKVRLARFGRKKRPFYRIVVTDSRKRRDSGWIESIGYYNPMTEPATVKMDLDRLNYWLGVGAQMSERVTKLKKIAEENNA.

This sequence belongs to the bacterial ribosomal protein bS16 family.

In Nautilia profundicola (strain ATCC BAA-1463 / DSM 18972 / AmH), this protein is Small ribosomal subunit protein bS16.